A 318-amino-acid polypeptide reads, in one-letter code: L-lactate dehydrogenase (318 aa).

NAD(+) contacts are provided by Val14, Asp35, Lys40, and Tyr66. Substrate-binding positions include Arg89 and 121–124 (NPVD). Ser144 contacts NAD(+). 149–152 (DTAR) lines the substrate pocket. The active-site Proton acceptor is His176. Tyr220 carries the phosphotyrosine modification. Thr229 is a substrate binding site.

It belongs to the LDH/MDH superfamily. LDH family. Homotetramer.

The protein resides in the cytoplasm. The enzyme catalyses (S)-lactate + NAD(+) = pyruvate + NADH + H(+). It functions in the pathway fermentation; pyruvate fermentation to lactate; (S)-lactate from pyruvate: step 1/1. Its function is as follows. Catalyzes the conversion of lactate to pyruvate. This Staphylococcus haemolyticus (strain JCSC1435) protein is L-lactate dehydrogenase.